We begin with the raw amino-acid sequence, 345 residues long: Beta-2-glycoprotein 1 (345 aa).

Residues Met-1 to Ala-19 form the signal peptide. 4 Sushi domains span residues Arg-21 to Pro-81, Arg-82 to Pro-139, Ile-140 to Glu-202, and Val-203 to Ala-262. 11 disulfides stabilise this stretch: Cys-23–Cys-66, Cys-51–Cys-79, Cys-84–Cys-124, Cys-110–Cys-137, Cys-142–Cys-188, Cys-174–Cys-200, Cys-205–Cys-248, Cys-234–Cys-260, Cys-264–Cys-315, Cys-300–Cys-325, and Cys-307–Cys-345. Thr-33 is a glycosylation site (O-linked (GalNAc...) threonine). O-linked (GalNAc...) threonine glycosylation occurs at Thr-149. The N-linked (GlcNAc...) (complex) asparagine glycan is linked to Asn-162. Residues Asn-183 and Asn-193 are each glycosylated (N-linked (GlcNAc...) asparagine). Asn-253 carries an N-linked (GlcNAc...) asparagine glycan. The interval Ser-263–Cys-345 is sushi-like.

N- and O-glycosylated. PubMed:6587378 also reports glycosylation on 'Asn-188' for their allele. Expressed by the liver and secreted in plasma.

The protein localises to the secreted. Binds to various kinds of negatively charged substances such as heparin, phospholipids, and dextran sulfate. May prevent activation of the intrinsic blood coagulation cascade by binding to phospholipids on the surface of damaged cells. The sequence is that of Beta-2-glycoprotein 1 (APOH) from Homo sapiens (Human).